The sequence spans 569 residues: Arginine--tRNA ligase (569 aa).

A 'HIGH' region motif is present at residues 123 to 133; that stretch reads ANPNGPLHVGH.

Belongs to the class-I aminoacyl-tRNA synthetase family.

The protein localises to the cytoplasm. The enzyme catalyses tRNA(Arg) + L-arginine + ATP = L-arginyl-tRNA(Arg) + AMP + diphosphate. In Methanosarcina mazei (strain ATCC BAA-159 / DSM 3647 / Goe1 / Go1 / JCM 11833 / OCM 88) (Methanosarcina frisia), this protein is Arginine--tRNA ligase.